We begin with the raw amino-acid sequence, 296 residues long: Ribonuclease HIII (296 aa).

Residues 80-296 (LALIGSDEVG…NTKKAYQRLK (217 aa)) enclose the RNase H type-2 domain. 3 residues coordinate a divalent metal cation: D86, E87, and D191.

The protein belongs to the RNase HII family. RnhC subfamily. It depends on Mn(2+) as a cofactor. The cofactor is Mg(2+).

Its subcellular location is the cytoplasm. It carries out the reaction Endonucleolytic cleavage to 5'-phosphomonoester.. Its function is as follows. Endonuclease that specifically degrades the RNA of RNA-DNA hybrids. The sequence is that of Ribonuclease HIII from Streptococcus thermophilus (strain ATCC BAA-250 / LMG 18311).